The following is a 285-amino-acid chain: MSEYTLENIAQVVEILREKSPLTHCITNVVTVKDCANAVLAVGASPIMANAPEEAEEIVGISNSLVINIGTLTKEQIETMKKSAKFAIENNKPFILDPVGVGISNIRNQTPIDIITNSKPSIIRGNLSEIKAIAMMYDILDECTMAKGVDVAQCDIINKDTLISNCNLIKNISEKLNTTIAVSGPIDIISDGHDVYTIENGDAMMSRITGSGCMLGCVLGAYLAVTNPLEAAITGTLVMGIAGELAAKTARDNNKGTGSFGIYLIDELSKLNKSTILSQSKLNKM.

Met48 provides a ligand contact to substrate. The ATP site is built by Arg124 and Ser183. Position 210 (Gly210) interacts with substrate.

Belongs to the Thz kinase family. Mg(2+) serves as cofactor.

It carries out the reaction 5-(2-hydroxyethyl)-4-methylthiazole + ATP = 4-methyl-5-(2-phosphooxyethyl)-thiazole + ADP + H(+). Its pathway is cofactor biosynthesis; thiamine diphosphate biosynthesis; 4-methyl-5-(2-phosphoethyl)-thiazole from 5-(2-hydroxyethyl)-4-methylthiazole: step 1/1. Its function is as follows. Catalyzes the phosphorylation of the hydroxyl group of 4-methyl-5-beta-hydroxyethylthiazole (THZ). The sequence is that of Hydroxyethylthiazole kinase 1 from Methanosphaera stadtmanae (strain ATCC 43021 / DSM 3091 / JCM 11832 / MCB-3).